We begin with the raw amino-acid sequence, 1028 residues long: Formin-like protein 3 (1028 aa).

G2 carries the N-myristoyl glycine lipid modification. The 447-residue stretch at 26 to 472 folds into the GBD/FH3 domain; that stretch reads MPMPEPCELE…EAFQRRCHLE (447 aa). Residue T95 is modified to Phosphothreonine. Position 174 is a phosphoserine (S174). Residues 493–541 form a disordered region; that stretch reads ELSEGMPPSDLDLLAPAPPPEEVLPLPPPPAPPLPPPPPPLPDKCPPAP. Residues 508–541 are compositionally biased toward pro residues; it reads PAPPPEEVLPLPPPPAPPLPPPPPPLPDKCPPAP. Residues 561 to 951 form the FH2 domain; it reads IKKPIKTKFR…MREKQLAQEA (391 aa). The DAD domain maps to 986 to 1018; sequence YEGKDGTIEDIITVLKSVPFTARTAKRGSRFFC. S1014 carries the post-translational modification Phosphoserine.

It belongs to the formin homology family. In terms of assembly, interacts with SRGAP2 (via SH3 domain). As to expression, expressed in endothelial cells.

The protein resides in the cytoplasm. Its subcellular location is the cell membrane. In terms of biological role, plays a role in the regulation of cell morphology and cytoskeletal organization. Required in the control of cell shape and migration. Required for developmental angiogenesis. In this process, required for microtubule reorganization and for efficient endothelial cell elongation. In quiescent endothelial cells, triggers rearrangement of the actin cytoskeleton, but does not alter microtubule alignement. The polypeptide is Formin-like protein 3 (FMNL3) (Homo sapiens (Human)).